The following is a 117-amino-acid chain: Protein Wnt-6 (117 aa).

A lipid anchor (O-palmitoleoyl serine; by PORCN) is attached at S1. A disulfide bridge connects residues C83 and C98. N84 carries N-linked (GlcNAc...) asparagine glycosylation.

It belongs to the Wnt family. Post-translationally, palmitoleoylation is required for efficient binding to frizzled receptors. Depalmitoleoylation leads to Wnt signaling pathway inhibition.

The protein resides in the secreted. It is found in the extracellular space. The protein localises to the extracellular matrix. Its function is as follows. Ligand for members of the frizzled family of seven transmembrane receptors. Probable developmental protein. May be a signaling molecule which affects the development of discrete regions of tissues. Is likely to signal over only few cell diameters. The protein is Protein Wnt-6 (wnt6) of Thunnus thynnus (Atlantic bluefin tuna).